The sequence spans 247 residues: 1-(5-phosphoribosyl)-5-[(5-phosphoribosylamino)methylideneamino] imidazole-4-carboxamide isomerase 2 (247 aa).

E8 serves as the catalytic Proton acceptor. Residue D128 is the Proton donor of the active site.

Belongs to the HisA/HisF family.

It is found in the cytoplasm. The enzyme catalyses 1-(5-phospho-beta-D-ribosyl)-5-[(5-phospho-beta-D-ribosylamino)methylideneamino]imidazole-4-carboxamide = 5-[(5-phospho-1-deoxy-D-ribulos-1-ylimino)methylamino]-1-(5-phospho-beta-D-ribosyl)imidazole-4-carboxamide. Its pathway is amino-acid biosynthesis; L-histidine biosynthesis; L-histidine from 5-phospho-alpha-D-ribose 1-diphosphate: step 4/9. In Ruegeria pomeroyi (strain ATCC 700808 / DSM 15171 / DSS-3) (Silicibacter pomeroyi), this protein is 1-(5-phosphoribosyl)-5-[(5-phosphoribosylamino)methylideneamino] imidazole-4-carboxamide isomerase 2.